A 376-amino-acid polypeptide reads, in one-letter code: Lipid-A-disaccharide synthase (376 aa).

This sequence belongs to the LpxB family.

It catalyses the reaction a lipid X + a UDP-2-N,3-O-bis[(3R)-3-hydroxyacyl]-alpha-D-glucosamine = a lipid A disaccharide + UDP + H(+). It participates in bacterial outer membrane biogenesis; LPS lipid A biosynthesis. Its function is as follows. Condensation of UDP-2,3-diacylglucosamine and 2,3-diacylglucosamine-1-phosphate to form lipid A disaccharide, a precursor of lipid A, a phosphorylated glycolipid that anchors the lipopolysaccharide to the outer membrane of the cell. The polypeptide is Lipid-A-disaccharide synthase (Coxiella burnetii (strain CbuG_Q212) (Coxiella burnetii (strain Q212))).